We begin with the raw amino-acid sequence, 332 residues long: Holliday junction branch migration complex subunit RuvB (332 aa).

The interval 1-181 (MTRFLDSDAM…FGITGHMEYY (181 aa)) is large ATPase domain (RuvB-L). ATP is bound by residues L20, R21, G62, K65, T66, T67, 128–130 (EDF), R171, Y181, and R218. Mg(2+) is bound at residue T66. Residues 182–252 (EENDLTEIIE…ITDKALTMLD (71 aa)) are small ATPAse domain (RuvB-S). A head domain (RuvB-H) region spans residues 255–332 (HEGLDYVDQK…EHLGYQRFDK (78 aa)). DNA contacts are provided by R291, R310, R312, and R315.

Belongs to the RuvB family. In terms of assembly, homohexamer. Forms an RuvA(8)-RuvB(12)-Holliday junction (HJ) complex. HJ DNA is sandwiched between 2 RuvA tetramers; dsDNA enters through RuvA and exits via RuvB. An RuvB hexamer assembles on each DNA strand where it exits the tetramer. Each RuvB hexamer is contacted by two RuvA subunits (via domain III) on 2 adjacent RuvB subunits; this complex drives branch migration. In the full resolvosome a probable DNA-RuvA(4)-RuvB(12)-RuvC(2) complex forms which resolves the HJ.

It is found in the cytoplasm. It carries out the reaction ATP + H2O = ADP + phosphate + H(+). In terms of biological role, the RuvA-RuvB-RuvC complex processes Holliday junction (HJ) DNA during genetic recombination and DNA repair, while the RuvA-RuvB complex plays an important role in the rescue of blocked DNA replication forks via replication fork reversal (RFR). RuvA specifically binds to HJ cruciform DNA, conferring on it an open structure. The RuvB hexamer acts as an ATP-dependent pump, pulling dsDNA into and through the RuvAB complex. RuvB forms 2 homohexamers on either side of HJ DNA bound by 1 or 2 RuvA tetramers; 4 subunits per hexamer contact DNA at a time. Coordinated motions by a converter formed by DNA-disengaged RuvB subunits stimulates ATP hydrolysis and nucleotide exchange. Immobilization of the converter enables RuvB to convert the ATP-contained energy into a lever motion, pulling 2 nucleotides of DNA out of the RuvA tetramer per ATP hydrolyzed, thus driving DNA branch migration. The RuvB motors rotate together with the DNA substrate, which together with the progressing nucleotide cycle form the mechanistic basis for DNA recombination by continuous HJ branch migration. Branch migration allows RuvC to scan DNA until it finds its consensus sequence, where it cleaves and resolves cruciform DNA. The polypeptide is Holliday junction branch migration complex subunit RuvB (Streptococcus agalactiae serotype Ia (strain ATCC 27591 / A909 / CDC SS700)).